Reading from the N-terminus, the 113-residue chain is Sensorin-A (113 aa).

Positions 1 to 32 (MPSRAATSPLNVQMMVVLCIVCLALQAVAANA) are cleaved as a signal peptide. Phe54 is subject to Phenylalanine amide. Residues 58–113 (SSSETYSTNLINLLSRQLVSQEELRAILEKQPILLDEVVKILDRNDDGYITVADLL) constitute a propeptide that is removed on maturation. The EF-hand domain occupies 87 to 113 (KQPILLDEVVKILDRNDDGYITVADLL). Positions 100, 102, 104, 106, and 111 each coordinate Ca(2+).

As to expression, seems to be specific to the mechanosensory neurons of the central nervous system.

The protein localises to the secreted. Its function is as follows. May function as an inhibitory cotransmitter acting in conjunction with the fast excitatory transmitter released by sensory neurons. The peptide selectively inhibits certain postsynaptic cells probably by means of sensorin A release. The protein is Sensorin-A (PSC1) of Aplysia californica (California sea hare).